We begin with the raw amino-acid sequence, 364 residues long: N-acetyl-gamma-glutamyl-phosphate reductase (364 aa).

The active site involves Cys157.

This sequence belongs to the NAGSA dehydrogenase family. Type 1 subfamily.

It is found in the cytoplasm. The catalysed reaction is N-acetyl-L-glutamate 5-semialdehyde + phosphate + NADP(+) = N-acetyl-L-glutamyl 5-phosphate + NADPH + H(+). The protein operates within amino-acid biosynthesis; L-arginine biosynthesis; N(2)-acetyl-L-ornithine from L-glutamate: step 3/4. In terms of biological role, catalyzes the NADPH-dependent reduction of N-acetyl-5-glutamyl phosphate to yield N-acetyl-L-glutamate 5-semialdehyde. This Bifidobacterium animalis subsp. lactis (strain AD011) protein is N-acetyl-gamma-glutamyl-phosphate reductase.